Here is a 154-residue protein sequence, read N- to C-terminus: 6,7-dimethyl-8-ribityllumazine synthase (154 aa).

Residues Phe-23, 57–59, and 81–83 each bind 5-amino-6-(D-ribitylamino)uracil; these read AYE and AVI. 86-87 contributes to the (2S)-2-hydroxy-3-oxobutyl phosphate binding site; the sequence is AT. The active-site Proton donor is His-89. Phe-114 contacts 5-amino-6-(D-ribitylamino)uracil. (2S)-2-hydroxy-3-oxobutyl phosphate is bound at residue Arg-128.

This sequence belongs to the DMRL synthase family.

The enzyme catalyses (2S)-2-hydroxy-3-oxobutyl phosphate + 5-amino-6-(D-ribitylamino)uracil = 6,7-dimethyl-8-(1-D-ribityl)lumazine + phosphate + 2 H2O + H(+). It functions in the pathway cofactor biosynthesis; riboflavin biosynthesis; riboflavin from 2-hydroxy-3-oxobutyl phosphate and 5-amino-6-(D-ribitylamino)uracil: step 1/2. In terms of biological role, catalyzes the formation of 6,7-dimethyl-8-ribityllumazine by condensation of 5-amino-6-(D-ribitylamino)uracil with 3,4-dihydroxy-2-butanone 4-phosphate. This is the penultimate step in the biosynthesis of riboflavin. This is 6,7-dimethyl-8-ribityllumazine synthase from Desulforamulus reducens (strain ATCC BAA-1160 / DSM 100696 / MI-1) (Desulfotomaculum reducens).